We begin with the raw amino-acid sequence, 299 residues long: 11-beta-hydroxysteroid dehydrogenase-like 4A (299 aa).

The chain crosses the membrane as a helical; Signal-anchor for type II membrane protein span at residues 10-30; the sequence is ILLPIVTVSFLLVFMPFSIFF. NADP(+) is bound by residues 54–80 and Asp-105; that span reads GSSS…VARR. Ser-184 is a binding site for substrate. The active-site Proton acceptor is Tyr-197. NADP(+)-binding positions include 197–201 and Lys-201; that span reads YAASK.

It belongs to the short-chain dehydrogenases/reductases (SDR) family.

The protein localises to the membrane. The protein is 11-beta-hydroxysteroid dehydrogenase-like 4A (HSD4) of Arabidopsis thaliana (Mouse-ear cress).